Reading from the N-terminus, the 241-residue chain is Demethylmenaquinone methyltransferase (241 aa).

Residues threonine 60, aspartate 81, and aspartate 106 to alanine 107 each bind S-adenosyl-L-methionine.

Belongs to the class I-like SAM-binding methyltransferase superfamily. MenG/UbiE family.

The catalysed reaction is a 2-demethylmenaquinol + S-adenosyl-L-methionine = a menaquinol + S-adenosyl-L-homocysteine + H(+). The protein operates within quinol/quinone metabolism; menaquinone biosynthesis; menaquinol from 1,4-dihydroxy-2-naphthoate: step 2/2. In terms of biological role, methyltransferase required for the conversion of demethylmenaquinol (DMKH2) to menaquinol (MKH2). The sequence is that of Demethylmenaquinone methyltransferase from Staphylococcus aureus (strain MRSA252).